Reading from the N-terminus, the 91-residue chain is Acyl carrier protein (91 aa).

A Carrier domain is found at 6–81 (EEIIAELGQI…DIVAYIQKLE (76 aa)). Ser-41 is modified (O-(pantetheine 4'-phosphoryl)serine).

Belongs to the acyl carrier protein (ACP) family. 4'-phosphopantetheine is transferred from CoA to a specific serine of apo-ACP by AcpS. This modification is essential for activity because fatty acids are bound in thioester linkage to the sulfhydryl of the prosthetic group.

It localises to the cytoplasm. It participates in lipid metabolism; fatty acid biosynthesis. Its function is as follows. Carrier of the growing fatty acid chain in fatty acid biosynthesis. The polypeptide is Acyl carrier protein (Rhodococcus erythropolis (strain PR4 / NBRC 100887)).